A 705-amino-acid polypeptide reads, in one-letter code: Phosphoribosylformylglycinamidine synthase subunit PurL (705 aa).

His32 is an active-site residue. Tyr35 is an ATP binding site. Glu76 provides a ligand contact to Mg(2+). Residues 77-80 and Arg99 contribute to the substrate site; that span reads SHNH. Catalysis depends on His78, which acts as the Proton acceptor. Asp100 lines the Mg(2+) pocket. Gln224 is a substrate binding site. Residue Asp252 participates in Mg(2+) binding. 296-298 contacts substrate; the sequence is ESQ. Residues Asp471 and Gly508 each contribute to the ATP site. Residue Asn509 participates in Mg(2+) binding. Ser511 serves as a coordination point for substrate.

This sequence belongs to the FGAMS family. Monomer. Part of the FGAM synthase complex composed of 1 PurL, 1 PurQ and 2 PurS subunits.

It is found in the cytoplasm. The catalysed reaction is N(2)-formyl-N(1)-(5-phospho-beta-D-ribosyl)glycinamide + L-glutamine + ATP + H2O = 2-formamido-N(1)-(5-O-phospho-beta-D-ribosyl)acetamidine + L-glutamate + ADP + phosphate + H(+). It participates in purine metabolism; IMP biosynthesis via de novo pathway; 5-amino-1-(5-phospho-D-ribosyl)imidazole from N(2)-formyl-N(1)-(5-phospho-D-ribosyl)glycinamide: step 1/2. Functionally, part of the phosphoribosylformylglycinamidine synthase complex involved in the purines biosynthetic pathway. Catalyzes the ATP-dependent conversion of formylglycinamide ribonucleotide (FGAR) and glutamine to yield formylglycinamidine ribonucleotide (FGAM) and glutamate. The FGAM synthase complex is composed of three subunits. PurQ produces an ammonia molecule by converting glutamine to glutamate. PurL transfers the ammonia molecule to FGAR to form FGAM in an ATP-dependent manner. PurS interacts with PurQ and PurL and is thought to assist in the transfer of the ammonia molecule from PurQ to PurL. This Pyrococcus horikoshii (strain ATCC 700860 / DSM 12428 / JCM 9974 / NBRC 100139 / OT-3) protein is Phosphoribosylformylglycinamidine synthase subunit PurL.